Reading from the N-terminus, the 189-residue chain is uncharacterized protein (189 aa).

The signal sequence occupies residues 1–23 (MVPPKPALWALLLALLGTAPSRA). N72 is a glycosylation site (N-linked (GlcNAc...) asparagine).

This is an uncharacterized protein from Homo sapiens (Human).